Consider the following 451-residue polypeptide: Macrophage scavenger receptor types I and II (451 aa).

The Cytoplasmic segment spans residues 1 to 50 (MEQWDHFHNQQEDTDSCSESVKFDARSMTALLPPNPKNSPSLQEKLKSFK). Residue serine 27 is modified to Phosphoserine. A helical; Signal-anchor for type II membrane protein membrane pass occupies residues 51–76 (AALIALYLLVFAVLIPLIGIVAAQLL). A spacer region spans residues 77-109 (KWETKNCSVSSTNANDITQSLTGKGNDSEEEMR). Residues 77–451 (KWETKNCSVS…SEDAGVTCTL (375 aa)) are Extracellular-facing. Residues asparagine 82, asparagine 102, asparagine 143, asparagine 184, asparagine 221, asparagine 249, and asparagine 267 are each glycosylated (N-linked (GlcNAc...) asparagine). Residues 171–255 (NAIDEISKSL…VLNNITNDLR (85 aa)) are a coiled coil. Residues 267–346 (NITLIQGPPG…EKGSGNTLTP (80 aa)) are disordered. Residues 273-341 (GPPGPPGEKG…KGQKGEKGSG (69 aa)) form the Collagen-like domain. One can recognise an SRCR domain in the interval 350-450 (VRLVGGSGPH…HSEDAGVTCT (101 aa)). 3 disulfide bridges follow: cysteine 375/cysteine 439, cysteine 388/cysteine 449, and cysteine 419/cysteine 429.

In terms of assembly, homotrimer. Interacts with MYO18A. Isoform I, isoform II and isoform III are expressed in monocyte-derived macrophages. Isoform I and isoform II are expressed in the liver, placenta and brain.

The protein localises to the membrane. In terms of biological role, membrane glycoproteins implicated in the pathologic deposition of cholesterol in arterial walls during atherogenesis. Two types of receptor subunits exist. These receptors mediate the endocytosis of a diverse group of macromolecules, including modified low density lipoproteins (LDL). Isoform III does not internalize acetylated LDL. This Homo sapiens (Human) protein is Macrophage scavenger receptor types I and II (MSR1).